We begin with the raw amino-acid sequence, 131 residues long: Large-conductance mechanosensitive channel (131 aa).

3 helical membrane passes run 8-28, 30-50, and 67-87; these read FAIR…GAFG, IVSS…LGGI, and GAFI…FLFV.

Belongs to the MscL family. Homopentamer.

The protein resides in the cell membrane. In terms of biological role, channel that opens in response to stretch forces in the membrane lipid bilayer. May participate in the regulation of osmotic pressure changes within the cell. This is Large-conductance mechanosensitive channel from Geobacillus kaustophilus (strain HTA426).